Here is a 47-residue protein sequence, read N- to C-terminus: Large ribosomal subunit protein bL27c (47 aa).

The segment at 1 to 21 (STKNGRDSNAQRLGVKKYGGE) is disordered.

It belongs to the bacterial ribosomal protein bL27 family.

The protein resides in the plastid. Its subcellular location is the chloroplast. The protein is Large ribosomal subunit protein bL27c (rpl27) of Porphyridium purpureum (Red alga).